The chain runs to 255 residues: Sorbose reductase sou1 (255 aa).

NADP(+) contacts are provided by Ile-21 and Asn-95. Residues Ser-148 and Tyr-163 each act as proton donor in the active site. NADP(+)-binding residues include Tyr-163, Lys-167, Ile-195, and Thr-197. Lys-167 acts as the Lowers pKa of active site Tyr in catalysis.

It belongs to the short-chain dehydrogenases/reductases (SDR) family.

The enzyme catalyses D-sorbitol + NADP(+) = keto-L-sorbose + NADPH + H(+). In terms of biological role, catalyzes the NADP dependent reduction of L-sorbose to D-glucitol. This chain is Sorbose reductase sou1 (sou1), found in Schizosaccharomyces pombe (strain 972 / ATCC 24843) (Fission yeast).